Reading from the N-terminus, the 206-residue chain is Large ribosomal subunit protein uL13z (206 aa).

It belongs to the universal ribosomal protein uL13 family.

This chain is Large ribosomal subunit protein uL13z (RPL13AA), found in Arabidopsis thaliana (Mouse-ear cress).